We begin with the raw amino-acid sequence, 600 residues long: Sulfite reductase [NADPH] flavoprotein alpha-component (600 aa).

The 139-residue stretch at 63-201 (ITLISASQTG…AAQAWRQRVV (139 aa)) folds into the Flavodoxin-like domain. Residues 69–74 (SQTGNA), 116–119 (STQG), and 152–161 (LGDTSYEHFC) contribute to the FMN site. The 215-residue stretch at 235 to 449 (ESPLTATLSV…IEHNDNFRLP (215 aa)) folds into the FAD-binding FR-type domain. FAD is bound by residues Thr323, Ala357, 387 to 390 (RLYS), 405 to 407 (TVG), and 420 to 423 (GGAS). NADP(+) is bound by residues 520–521 (SR), 526–530 (KIYVQ), and Asp562. Tyr600 provides a ligand contact to FAD.

This sequence belongs to the NADPH-dependent sulphite reductase flavoprotein subunit CysJ family. It in the N-terminal section; belongs to the flavodoxin family. In the C-terminal section; belongs to the flavoprotein pyridine nucleotide cytochrome reductase family. Alpha(8)-beta(8). The alpha component is a flavoprotein, the beta component is a hemoprotein. The cofactor is FAD. FMN serves as cofactor.

The enzyme catalyses hydrogen sulfide + 3 NADP(+) + 3 H2O = sulfite + 3 NADPH + 4 H(+). It functions in the pathway sulfur metabolism; hydrogen sulfide biosynthesis; hydrogen sulfide from sulfite (NADPH route): step 1/1. In terms of biological role, component of the sulfite reductase complex that catalyzes the 6-electron reduction of sulfite to sulfide. This is one of several activities required for the biosynthesis of L-cysteine from sulfate. The flavoprotein component catalyzes the electron flow from NADPH -&gt; FAD -&gt; FMN to the hemoprotein component. The protein is Sulfite reductase [NADPH] flavoprotein alpha-component of Cronobacter sakazakii (strain ATCC BAA-894) (Enterobacter sakazakii).